We begin with the raw amino-acid sequence, 509 residues long: Aldehyde dehydrogenase 1A1 (509 aa).

Residues I175–N178, K201–E204, G234–P235, G254–S255, and E277–G279 each bind NAD(+). E277 acts as the Proton acceptor in catalysis. C311 acts as the Nucleophile in catalysis. Residues E357–K361 and E408–F410 each bind NAD(+).

The protein belongs to the aldehyde dehydrogenase family. As to quaternary structure, homotetramer.

The protein localises to the cytoplasm. Its subcellular location is the cytosol. The protein resides in the cell projection. It is found in the axon. The enzyme catalyses an aldehyde + NAD(+) + H2O = a carboxylate + NADH + 2 H(+). The catalysed reaction is all-trans-retinal + NAD(+) + H2O = all-trans-retinoate + NADH + 2 H(+). It catalyses the reaction 9-cis-retinal + NAD(+) + H2O = 9-cis-retinoate + NADH + 2 H(+). It carries out the reaction 11-cis-retinal + NAD(+) + H2O = 11-cis-retinoate + NADH + 2 H(+). The enzyme catalyses 13-cis-retinal + NAD(+) + H2O = 13-cis-retinoate + NADH + 2 H(+). The catalysed reaction is 3-deoxyglucosone + NAD(+) + H2O = 2-dehydro-3-deoxy-D-gluconate + NADH + 2 H(+). It catalyses the reaction (E)-4-hydroxynon-2-enal + NAD(+) + H2O = (E)-4-hydroxynon-2-enoate + NADH + 2 H(+). It carries out the reaction malonaldehyde + NAD(+) + H2O = 3-oxopropanoate + NADH + 2 H(+). The enzyme catalyses hexanal + NAD(+) + H2O = hexanoate + NADH + 2 H(+). The catalysed reaction is propanal + NAD(+) + H2O = propanoate + NADH + 2 H(+). It catalyses the reaction acetaldehyde + NAD(+) + H2O = acetate + NADH + 2 H(+). It carries out the reaction benzaldehyde + NAD(+) + H2O = benzoate + NADH + 2 H(+). The enzyme catalyses 4-aminobutanal + NAD(+) + H2O = 4-aminobutanoate + NADH + 2 H(+). It participates in cofactor metabolism; retinol metabolism. Functionally, cytosolic dehydrogenase that catalyzes the irreversible oxidation of a wide range of aldehydes to their corresponding carboxylic acid. Functions downstream of retinol dehydrogenases and catalyzes the oxidation of retinaldehyde into retinoic acid, the second step in the oxidation of retinol/vitamin A into retinoic acid. This pathway is crucial to control the levels of retinol and retinoic acid, two important molecules which excess can be teratogenic and cytotoxic. Also oxidizes aldehydes resulting from lipid peroxidation like (E)-4-hydroxynon-2-enal/HNE, malonaldehyde and hexanal that form protein adducts and are highly cytotoxic. By participating for instance to the clearance of (E)-4-hydroxynon-2-enal/HNE in the lens epithelium prevents the formation of HNE-protein adducts and lens opacification. Also functions downstream of fructosamine-3-kinase in the fructosamine degradation pathway by catalyzing the oxidation of 3-deoxyglucosone, the carbohydrate product of fructosamine 3-phosphate decomposition, which is itself a potent glycating agent that may react with lysine and arginine side-chains of proteins. Also has an aminobutyraldehyde dehydrogenase activity and is probably part of an alternative pathway for the biosynthesis of GABA/4-aminobutanoate in midbrain, thereby playing a role in GABAergic synaptic transmission. This chain is Aldehyde dehydrogenase 1A1, found in Gallus gallus (Chicken).